Here is a 296-residue protein sequence, read N- to C-terminus: Glycine--tRNA ligase alpha subunit (296 aa).

This sequence belongs to the class-II aminoacyl-tRNA synthetase family. As to quaternary structure, tetramer of two alpha and two beta subunits.

It localises to the cytoplasm. It carries out the reaction tRNA(Gly) + glycine + ATP = glycyl-tRNA(Gly) + AMP + diphosphate. The protein is Glycine--tRNA ligase alpha subunit of Francisella philomiragia subsp. philomiragia (strain ATCC 25017 / CCUG 19701 / FSC 153 / O#319-036).